Reading from the N-terminus, the 329-residue chain is Porphobilinogen deaminase (329 aa).

C253 carries the S-(dipyrrolylmethanemethyl)cysteine modification.

This sequence belongs to the HMBS family. In terms of assembly, monomer. Dipyrromethane serves as cofactor.

It catalyses the reaction 4 porphobilinogen + H2O = hydroxymethylbilane + 4 NH4(+). Functionally, tetrapolymerization of the monopyrrole PBG into the hydroxymethylbilane pre-uroporphyrinogen in several discrete steps. The polypeptide is Porphobilinogen deaminase (Leifsonia xyli subsp. xyli (strain CTCB07)).